A 373-amino-acid polypeptide reads, in one-letter code: Leucine aminopeptidase 1 (373 aa).

A signal peptide spans 1–18; that stretch reads MKLLSVLALSATASSVLG. A propeptide spanning residues 19–75 is cleaved from the precursor; that stretch reads ASIPVDTRAEKFLIELAPGETRWVTEEEKWALKESGQDFFDITDEEVGFTAAVAQPA. The Zn(2+) site is built by histidine 176 and aspartate 195. N-linked (GlcNAc...) asparagine glycosylation occurs at asparagine 196. Residues glutamate 234 and aspartate 261 each coordinate Zn(2+). Asparagine 288 is a glycosylation site (N-linked (GlcNAc...) asparagine). Cysteine 310 and cysteine 314 form a disulfide bridge. Histidine 343 lines the Zn(2+) pocket. Asparagine 348 carries N-linked (GlcNAc...) asparagine glycosylation.

Belongs to the peptidase M28 family. M28E subfamily. In terms of assembly, monomer. Zn(2+) is required as a cofactor.

Its subcellular location is the secreted. Functionally, extracellular aminopeptidase that allows assimilation of proteinaceous substrates. This chain is Leucine aminopeptidase 1 (LAP1), found in Arthroderma gypseum (strain ATCC MYA-4604 / CBS 118893) (Microsporum gypseum).